The following is a 254-amino-acid chain: Triosephosphate isomerase (254 aa).

A substrate-binding site is contributed by 9–11 (NWK). His95 serves as the catalytic Electrophile. Glu167 acts as the Proton acceptor in catalysis. Residues Gly173, Ser213, and 234 to 235 (GG) contribute to the substrate site.

This sequence belongs to the triosephosphate isomerase family. As to quaternary structure, homodimer.

Its subcellular location is the cytoplasm. It carries out the reaction D-glyceraldehyde 3-phosphate = dihydroxyacetone phosphate. It participates in carbohydrate biosynthesis; gluconeogenesis. The protein operates within carbohydrate degradation; glycolysis; D-glyceraldehyde 3-phosphate from glycerone phosphate: step 1/1. Functionally, involved in the gluconeogenesis. Catalyzes stereospecifically the conversion of dihydroxyacetone phosphate (DHAP) to D-glyceraldehyde-3-phosphate (G3P). The sequence is that of Triosephosphate isomerase from Roseiflexus sp. (strain RS-1).